Consider the following 140-residue polypeptide: Trafficking protein particle complex subunit 2-like protein (140 aa).

This sequence belongs to the TRAPP small subunits family. Sedlin subfamily.

The chain is Trafficking protein particle complex subunit 2-like protein (trappc2l) from Dictyostelium discoideum (Social amoeba).